A 484-amino-acid polypeptide reads, in one-letter code: Fumigaclavine B O-acetyltransferase ifgI (484 aa).

This sequence belongs to the fumigaclavine B O-acetyltransferase family. Monomer.

It carries out the reaction fumigaclavine B + acetyl-CoA = fumigaclavine A + CoA. It functions in the pathway alkaloid biosynthesis; ergot alkaloid biosynthesis. Fumigaclavine B O-acetyltransferase; part of the gene cluster that mediates the biosynthesis of isofumigaclavines, fungal ergot alkaloids. The tryptophan dimethylallyltransferase ifgA catalyzes the first step of ergot alkaloid biosynthesis by condensing dimethylallyl diphosphate (DMAP) and tryptophan to form 4-dimethylallyl-L-tryptophan. The second step is catalyzed by the methyltransferase ifgB that methylates 4-dimethylallyl-L-tryptophan in the presence of S-adenosyl-L-methionine, resulting in the formation of N-methyl-dimethylallyl-L-tryptophan. The catalase ifgD and the FAD-dependent oxidoreductase ifgC then transform N-methyl-dimethylallyl-L-tryptophan to chanoclavine-I which is further oxidized by ifgE in the presence of NAD(+), resulting in the formation of chanoclavine-I aldehyde. The chanoclavine-I aldehyde reductases ifgG and/or fgaOx3 reduce chanoclavine-I aldehyde to dihydrochanoclavine-I aldehyde that spontaneously dehydrates to form 6,8-dimethyl-6,7-didehydroergoline. The festuclavine dehydrogenases ifgF1 and/or ifgF2 then catalyze the reduction of 6,8-dimethyl-6,7-didehydroergoline to form festuclavine. Hydrolysis of festuclavine by a yet undetermined cytochrome P450 monooxygenase (called ifgH) then leads to the formation of isofumigaclavine B which is in turn acetylated by ifgI to isofumigaclavine A. Penicillium roqueforti has interestingly at least two sets of genes for the consumption of chanoclavine-I aldehyde on three different loci, the OYEs ifgG/fgaOx3 and the festuclavine synthase homologs ifgF1/ifgF2. The reason for the duplication of these genes is unclear, probably to ensure the conversion of chanoclavine-I aldehyde by differential gene expression under various environmental conditions. In Penicillium roqueforti (strain FM164), this protein is Fumigaclavine B O-acetyltransferase ifgI.